The chain runs to 167 residues: Small ribosomal subunit protein uS3m (167 aa).

The N-terminal 35 residues, 1–35 (MVALYCGGGLRPLMLSWSRDLPCIWRALHTSAVCF), are a transit peptide targeting the mitochondrion.

The protein belongs to the universal ribosomal protein uS3 family. In terms of assembly, component of the mitochondrial ribosome small subunit (28S) which comprises a 12S rRNA and about 30 distinct proteins.

It is found in the mitochondrion. The polypeptide is Small ribosomal subunit protein uS3m (MRPS24) (Bos taurus (Bovine)).